The primary structure comprises 884 residues: Probable LRR receptor-like serine/threonine-protein kinase PAM74 (884 aa).

Positions 1-23 (MDSPCWLLLLLLGAFAIIGCVQA) are cleaved as a signal peptide. The Extracellular portion of the chain corresponds to 24 to 510 (QDQQEFISLD…TEKNSKKKFP (487 aa)). N-linked (GlcNAc...) asparagine glycosylation is found at Asn143, Asn182, Asn200, Asn256, Asn289, Asn400, Asn403, Asn417, Asn433, Asn444, Asn465, and Asn470. LRR repeat units lie at residues 412–433 (RVLS…AIQN), 436–457 (HLEK…FLAQ), and 460–480 (SLVI…QGLR). A helical membrane pass occupies residues 511-531 (VVIVASVASVAIIVAVLVIIF). Residues 532-884 (VLSKKKSSTV…FDTELFPRAR (353 aa)) are Cytoplasmic-facing. Thr570 is subject to Phosphothreonine. Residues 579 to 852 (NNFQRVVGEG…QVANELKECL (274 aa)) enclose the Protein kinase domain. ATP is bound by residues 585–593 (VGEGGFGVV) and Lys607. At Tyr652 the chain carries Phosphotyrosine. Asp704 functions as the Proton acceptor in the catalytic mechanism. The residue at position 738 (Ser738) is a Phosphoserine. Residues Thr739 and Thr744 each carry the phosphothreonine modification. At Tyr752 the chain carries Phosphotyrosine.

The protein belongs to the protein kinase superfamily. Ser/Thr protein kinase family. As to quaternary structure, binds to the ammonium transporter AMT1-1.

It is found in the membrane. The catalysed reaction is L-seryl-[protein] + ATP = O-phospho-L-seryl-[protein] + ADP + H(+). It carries out the reaction L-threonyl-[protein] + ATP = O-phospho-L-threonyl-[protein] + ADP + H(+). Its function is as follows. Required for accurate photosynthesis. In Arabidopsis thaliana (Mouse-ear cress), this protein is Probable LRR receptor-like serine/threonine-protein kinase PAM74 (PAM74).